Consider the following 182-residue polypeptide: Large ribosomal subunit protein bL25 (182 aa).

Belongs to the bacterial ribosomal protein bL25 family. CTC subfamily. Part of the 50S ribosomal subunit; part of the 5S rRNA/L5/L18/L25 subcomplex. Contacts the 5S rRNA. Binds to the 5S rRNA independently of L5 and L18.

Its function is as follows. This is one of the proteins that binds to the 5S RNA in the ribosome where it forms part of the central protuberance. The polypeptide is Large ribosomal subunit protein bL25 (Borrelia turicatae (strain 91E135)).